The sequence spans 281 residues: Pantothenate synthetase (281 aa).

30 to 37 contacts ATP; the sequence is MGNLHQGH. The active-site Proton donor is His37. Gln61 is a binding site for (R)-pantoate. Gln61 is a binding site for beta-alanine. An ATP-binding site is contributed by 148–151; it reads GQKD. Gln154 is a (R)-pantoate binding site. Residues Ala177 and 185–188 contribute to the ATP site; that span reads LSSR.

It belongs to the pantothenate synthetase family. As to quaternary structure, homodimer.

The protein localises to the cytoplasm. It catalyses the reaction (R)-pantoate + beta-alanine + ATP = (R)-pantothenate + AMP + diphosphate + H(+). The protein operates within cofactor biosynthesis; (R)-pantothenate biosynthesis; (R)-pantothenate from (R)-pantoate and beta-alanine: step 1/1. Catalyzes the condensation of pantoate with beta-alanine in an ATP-dependent reaction via a pantoyl-adenylate intermediate. The chain is Pantothenate synthetase from Acinetobacter baylyi (strain ATCC 33305 / BD413 / ADP1).